Reading from the N-terminus, the 950-residue chain is Protocadherin alpha-9 (950 aa).

The signal sequence occupies residues 1–29 (MLYSSRGDPEGQPLLLSLLILAMWVVGSG). 6 consecutive Cadherin domains span residues 30 to 133 (QLHY…PPVF), 134 to 242 (PATQ…APVF), 243 to 350 (DRTL…APQL), 351 to 455 (TIKT…APAF), 456 to 565 (AQPE…APAL), and 588 to 678 (GVVV…APKS). Residues 30-697 (QLHYSVPEEA…GPEVTLVDVN (668 aa)) are Extracellular-facing. Asparagine 254 and asparagine 265 each carry an N-linked (GlcNAc...) asparagine glycan. N-linked (GlcNAc...) asparagine glycosylation is present at asparagine 548. A helical membrane pass occupies residues 698-718 (VYLIIAICAVSSLLVLTLLLY). At 719–950 (TVLRCSAMPT…GNSTTDNSDQ (232 aa)) the chain is on the cytoplasmic side. A PXXP 1 repeat occupies 734 to 737 (PGKP). Positions 734 to 894 (PGKPTLVCSS…PDKFIIPGSP (161 aa)) are 5 X 4 AA repeats of P-X-X-P. Disordered regions lie at residues 759–808 (CSGE…DWRY) and 827–950 (ILRA…NSDQ). Over residues 789–798 (PSASSDSSGK) the composition is skewed to polar residues. 4 PXXP repeats span residues 799-802 (PRQP), 832-835 (PGGP), 873-876 (PGNP), and 891-894 (PGSP). Residues 909 to 923 (DKSDFITFGKKEETK) are compositionally biased toward basic and acidic residues.

It is found in the cell membrane. In terms of biological role, potential calcium-dependent cell-adhesion protein. May be involved in the establishment and maintenance of specific neuronal connections in the brain. This chain is Protocadherin alpha-9 (PCDHA9), found in Pan troglodytes (Chimpanzee).